The sequence spans 309 residues: Replication factor C subunit 4 (309 aa).

Residues valine 5, valine 17, 42–50 (GPPGTGKTT), asparagine 134, and arginine 192 each bind ATP.

Belongs to the activator 1 small subunits family. In terms of assembly, component of the replication factor C (RFC) complex.

Its subcellular location is the nucleus. Component of ATP-dependent clamp loader (RFC and RFC-like) complexes for DNA clamps. During a clamp loading circle, the RFC:clamp complex binds to DNA and the recognition of the double-stranded/single-stranded junction stimulates ATP hydrolysis by RFC. The complex presumably provides bipartite ATP sites in which one subunit supplies a catalytic site for hydrolysis of ATP bound to the neighboring subunit. Dissociation of RFC from the clamp leaves the clamp encircling DNA. Component of the replication factor C (RFC or activator 1) complex which acts during elongation of primed DNA templates by DNA polymerase delta and epsilon. RFC has an essential but redundant activity in sister chromatid cohesion establishment. In Encephalitozoon cuniculi (strain GB-M1) (Microsporidian parasite), this protein is Replication factor C subunit 4 (RFC4).